The sequence spans 450 residues: Bestrophin homolog 1 (450 aa).

Residues 1–31 (MTINYHKEIMTSHPWTFFLLLFKWKGSIWKA) lie on the Cytoplasmic side of the membrane. The chain crosses the membrane as a helical span at residues 32-51 (VYMETIIFLICYGIISVIYK). At 52-60 (TAMGESSQR) the chain is on the extracellular side. The chain crosses the membrane as a helical span at residues 61-82 (TFESLVRYFDKRLSYIPLEFVL). At 83-242 (GFFVTTVVNR…DWVPLPLMYP (160 aa)) the chain is on the cytoplasmic side. The chain crosses the membrane as a helical span at residues 243 to 260 (QLVCLAVNLYFLVSIIAR). Topologically, residues 261–278 (QLVIEKHKMVDEVDVYFP) are extracellular. The helical transmembrane segment at 279 to 292 (VMTFLQFIFYMGWL) threads the bilayer. Topologically, residues 293-450 (KVIDVMLNPF…WKIPTNPQKF (158 aa)) are cytoplasmic. 3 residues coordinate Ca(2+): N300, D305, and D308.

Belongs to the anion channel-forming bestrophin (TC 1.A.46) family. Calcium-sensitive chloride channel subfamily. Forms oligomers.

It localises to the cell membrane. The catalysed reaction is chloride(in) = chloride(out). Its function is as follows. Ligand-gated anion channel that allows the movement of chloride monoatomic anions across cell membranes when activated by Calcium (Ca2+). This is Bestrophin homolog 1 (best-1) from Caenorhabditis elegans.